Here is a 339-residue protein sequence, read N- to C-terminus: Putative ABC transporter ATP-binding protein MG467 homolog (339 aa).

The interval Lys41–Leu87 is disordered. Basic residues predominate over residues Lys42–Lys53. Positions Val54–Lys68 are enriched in basic and acidic residues. A compositionally biased stretch (basic residues) spans Lys74–Lys83. In terms of domain architecture, ABC transporter spans Ile112 to Leu338. Gly150–Thr157 provides a ligand contact to ATP.

Belongs to the ABC transporter superfamily.

The sequence is that of Putative ABC transporter ATP-binding protein MG467 homolog from Mycoplasma pneumoniae (strain ATCC 29342 / M129 / Subtype 1) (Mycoplasmoides pneumoniae).